The following is a 188-amino-acid chain: Thymidine kinase (188 aa).

ATP is bound at residue 17 to 24 (GPMFAGKT). The active-site Proton acceptor is the Glu-92. Phe-121 contacts substrate. 2 residues coordinate Zn(2+): Cys-146 and Cys-149. 166-170 (LILAG) lines the substrate pocket. Residues Cys-179 and Cys-182 each contribute to the Zn(2+) site.

Belongs to the thymidine kinase family.

It catalyses the reaction thymidine + ATP = dTMP + ADP + H(+). In terms of biological role, phosphorylates thymidine. ASFV replicates in the cytoplasm of infected cells and contains genes encoding a number of enzymes needed for DNA synthesis, including thymidine kinase. Important for growth in swine macrophages in vitro and is a virus virulence factor in swine. The sequence is that of Thymidine kinase from Ornithodoros (relapsing fever ticks).